Reading from the N-terminus, the 173-residue chain is MPTTTTTAEDGFPATGRLASVDYGTVRIGVAICDPDWILASPLEVHPVSTPEKDAQYFIDLAKSERIAAWVVGLPIHCDGGESDKSKESRKFAAWLKETTGLPTRLFDERFTTVAANAKIRQGKTTRKKTKQRVDAVAAQVLLESFLEACRYRGELAGHCLEDSTSDESLDDA.

This sequence belongs to the YqgF nuclease family.

Its subcellular location is the cytoplasm. Functionally, could be a nuclease involved in processing of the 5'-end of pre-16S rRNA. This Rhodopirellula baltica (strain DSM 10527 / NCIMB 13988 / SH1) protein is Putative pre-16S rRNA nuclease.